The sequence spans 397 residues: Acetate kinase (397 aa).

Mg(2+) is bound at residue asparagine 7. Lysine 14 contributes to the ATP binding site. Arginine 90 provides a ligand contact to substrate. Catalysis depends on aspartate 147, which acts as the Proton donor/acceptor. ATP contacts are provided by residues 207-211, 282-284, and 330-334; these read HLGNG, DFR, and GLGEN. Glutamate 383 is a Mg(2+) binding site.

This sequence belongs to the acetokinase family. In terms of assembly, homodimer. Requires Mg(2+) as cofactor. The cofactor is Mn(2+).

The protein localises to the cytoplasm. It carries out the reaction acetate + ATP = acetyl phosphate + ADP. It functions in the pathway metabolic intermediate biosynthesis; acetyl-CoA biosynthesis; acetyl-CoA from acetate: step 1/2. In terms of biological role, catalyzes the formation of acetyl phosphate from acetate and ATP. Can also catalyze the reverse reaction. The protein is Acetate kinase of Clostridium botulinum (strain 657 / Type Ba4).